A 1040-amino-acid polypeptide reads, in one-letter code: Multidrug resistance protein MdtB (1040 aa).

A run of 12 helical transmembrane segments spans residues 25–45 (LLMA…PVAA), 347–367 (LMLA…NIPA), 369–389 (IIPG…MVFL), 396–416 (LTLM…IVVI), 440–460 (IGFT…PLLF), 472–492 (FAVT…TLTP), 537–557 (WLTL…WIVI), 863–883 (LGST…VLGV), 888–908 (FIHP…ALLA), 910–930 (IIAG…LIGI), 968–988 (ILMT…STGV), and 998–1018 (IAMV…TPVI).

This sequence belongs to the resistance-nodulation-cell division (RND) (TC 2.A.6) family. MdtB subfamily. Part of a tripartite efflux system composed of MdtA, MdtB and MdtC. MdtB forms a heteromultimer with MdtC.

It localises to the cell inner membrane. In Salmonella agona (strain SL483), this protein is Multidrug resistance protein MdtB.